Consider the following 270-residue polypeptide: Probable inositol 1-monophosphatase ImpA (270 aa).

Mg(2+) contacts are provided by glutamate 69, aspartate 85, isoleucine 87, and aspartate 88. Residue glutamate 69 coordinates substrate. Residues 87–90 (IDGT), arginine 187, and aspartate 216 contribute to the substrate site. Position 216 (aspartate 216) interacts with Mg(2+).

The protein belongs to the inositol monophosphatase superfamily. Mg(2+) serves as cofactor.

It catalyses the reaction a myo-inositol phosphate + H2O = myo-inositol + phosphate. The protein operates within polyol metabolism; myo-inositol biosynthesis; myo-inositol from D-glucose 6-phosphate: step 2/2. Its function is as follows. Catalyzes the dephosphorylation of inositol 1-phosphate (I-1-P) to yield free myo-inositol, a key metabolite in mycobacteria. The chain is Probable inositol 1-monophosphatase ImpA (impA) from Mycobacterium tuberculosis (strain ATCC 25618 / H37Rv).